Consider the following 121-residue polypeptide: MPTIQQLIRSSRKKITKKTKSPALKMCPQRRGVCSRVYTTTPKKPNSALRKVARIKLTSGFEVTAYIPGIGHNLQEHSVVLIRGGRVKDLPGVRYHIIRGTLDTSAVKDRIRSRSKYGVSK.

This sequence belongs to the universal ribosomal protein uS12 family. Part of the 30S ribosomal subunit.

The protein resides in the plastid. Its subcellular location is the chloroplast. Its function is as follows. With S4 and S5 plays an important role in translational accuracy. Located at the interface of the 30S and 50S subunits. The chain is Small ribosomal subunit protein uS12c (rps12) from Bigelowiella natans (Pedinomonas minutissima).